Here is a 131-residue protein sequence, read N- to C-terminus: 23S rRNA-specific endonuclease VapC20 (131 aa).

Residues 2 to 125 (IFVDTSFWAA…FDGDFSAAGF (124 aa)) enclose the PINc domain. Positions 5 and 98 each coordinate Mg(2+).

It belongs to the PINc/VapC protein family. It depends on Mg(2+) as a cofactor.

In terms of biological role, toxic component of a type II toxin-antitoxin (TA) system. An endoribonuclease that cleaves 23S rRNA in the sarcin-ricin loop (SRL). The SRL sequence is highly conserved and is implicated in GTP hydrolysis by EF-Tu and EF-G. Acts on purified ribosomes but not on isolated RNA. Its toxic effect is neutralized by coexpression with cognate antitoxin VapB20. The sequence is that of 23S rRNA-specific endonuclease VapC20 (vapC20) from Mycobacterium tuberculosis (strain CDC 1551 / Oshkosh).